The chain runs to 1070 residues: MLGDGNEGISTIPGFNQIQFEGFCRFIDQGLTEELYKFPKIEDTDQEIEFQLFVETYQLVEPLIKERDAVYESLTYSSELYVSAGLIWKNSRDMQEQTIFIGNIPLMNSLGTSIVNGIYRIVINQILQSPGIYYRSELDHNGISVYTGTIISDWGGRSELEIDRKARIWARVSRKQKISILVLSSAMGLNLREILENVCYPEIFLSFLNDKERKKIGSKENSILEFYQQFACVGGDPVFSESLCKELQKKFFQQRCELGRIGRRNMNRKLNLDIPQNNTFLLPRDILAAADHLIGLKFGMGALDDMNHLKNKRIRSVADLLQDQFGLALVRLENVVRGTICGAIRHKLIPTPQNLVTSPPLTTTYESFFGLHPLSQVLDRTNPLTQIVHGRKLSYLGPGGLTGRTASFRIRDIHPSHYGRICPIDTSEGINVGLIGSLSIHARIGHWGSLESPFYEISERSTGVRMLYLSPGSDEYYMVAAGNSLALNRDIQEEQVVPARYRQEFLTIAWEQVHLRSIFPFQYFSIGASLIPFIEHNDANRALMSSNMQRQAVPLSRSEKCIVGTGLERQAALDSGALAIAEREGRIVYTNTDKILLAGNGDILSIPLVIYQRSNKNTCMHQKLRVPRGKCIKKGQILADGAATVGGELALGKNVLVAYMPWEGYNSEDAVLISERLVYEDIYTSFHIRKYEIHTHVTSQGPEKVTNEIPHLEAHLLRNLDKKGIVMLGSWVETGDILVGKLTPQVVKESSYAPEDRLLRAILGIQVSTSKETCLKLPIGGRGRVIDVRWIQKRGGSSYNPETIRVYISQKREIKVGDKVAGRHGNKGIISKILPRQDMPYLQDGRSVDMVFNPLGVPSRMNVGQIFECSLGLAGSLLDRHYRIAPFDERYEQEASRKLVFSELYEASKQTANPWVFEPEYPGKSRIFDGRTGNPFEQPVIIGKPYILKLIHQVDDKIHGRSSGHYALVTQQPLRGRAKQGGQRVGEMEVWALEGFGVAHILQEMLTYKSDHIRARQEVLGTTIIGGTIPNPEDAPESFRLLVRELRSLALELNHFLVSEKNFQINRKEA.

This sequence belongs to the RNA polymerase beta chain family. As to quaternary structure, in plastids the minimal PEP RNA polymerase catalytic core is composed of four subunits: alpha, beta, beta', and beta''. When a (nuclear-encoded) sigma factor is associated with the core the holoenzyme is formed, which can initiate transcription.

The protein resides in the plastid. Its subcellular location is the chloroplast. The enzyme catalyses RNA(n) + a ribonucleoside 5'-triphosphate = RNA(n+1) + diphosphate. In terms of biological role, DNA-dependent RNA polymerase catalyzes the transcription of DNA into RNA using the four ribonucleoside triphosphates as substrates. The polypeptide is DNA-directed RNA polymerase subunit beta (Solanum bulbocastanum (Wild potato)).